A 235-amino-acid polypeptide reads, in one-letter code: Small ribosomal subunit protein eS4 (235 aa).

The region spanning 37–110 (LPLGLIIRDV…KGRLVLYKLN (74 aa)) is the S4 RNA-binding domain.

Belongs to the eukaryotic ribosomal protein eS4 family.

This chain is Small ribosomal subunit protein eS4, found in Methanosarcina mazei (strain ATCC BAA-159 / DSM 3647 / Goe1 / Go1 / JCM 11833 / OCM 88) (Methanosarcina frisia).